The chain runs to 44 residues: DNA-directed RNA polymerase subunit Rpo12 (44 aa).

Positions 8, 22, and 25 each coordinate Zn(2+).

Belongs to the archaeal Rpo12/eukaryotic RPC10 RNA polymerase subunit family. Part of the RNA polymerase complex. Requires Zn(2+) as cofactor.

It is found in the cytoplasm. The enzyme catalyses RNA(n) + a ribonucleoside 5'-triphosphate = RNA(n+1) + diphosphate. Functionally, DNA-dependent RNA polymerase (RNAP) catalyzes the transcription of DNA into RNA using the four ribonucleoside triphosphates as substrates. This is DNA-directed RNA polymerase subunit Rpo12 from Haloquadratum walsbyi (strain DSM 16790 / HBSQ001).